A 188-amino-acid polypeptide reads, in one-letter code: Succinate-acetate/proton symporter SatP (188 aa).

At 1 to 13 the chain is on the cytoplasmic side; that stretch reads MGNTKLANPAPLG. Residues 14-34 traverse the membrane as a helical segment; that stretch reads LMGFGMTTILLNLHNVGYFAL. Aspartate 35 is a topological domain (periplasmic). The chain crosses the membrane as a helical span at residues 36-56; the sequence is GIILAMGIFYGGIAQIFAGLL. Residues 57-63 lie on the Cytoplasmic side of the membrane; sequence EYKKGNT. The chain crosses the membrane as a helical span at residues 64-84; it reads FGLTAFTSYGSFWLTLVAILL. At 85–97 the chain is on the periplasmic side; it reads MPKLGLTDAPNAQ. Residues 98–118 form a helical membrane-spanning segment; it reads FLGVYLGLWGVFTLFMFFGTL. Residues 119-122 lie on the Cytoplasmic side of the membrane; it reads KGAR. A helical membrane pass occupies residues 123 to 143; that stretch reads VLQFVFFSLTVLFALLAIGNI. The Periplasmic segment spans residues 144–148; it reads AGNAA. A helical membrane pass occupies residues 149 to 169; it reads IIHFAGWIGLICGASAIYLAM. At 170 to 188 the chain is on the cytoplasmic side; the sequence is GEVLNEQFGRTVLPIGESH.

It belongs to the acetate uptake transporter (AceTr) (TC 2.A.96) family.

Its subcellular location is the cell inner membrane. In terms of biological role, uptake of acetate and succinate. Transport is energetically dependent on the protonmotive force. The polypeptide is Succinate-acetate/proton symporter SatP (satP) (Escherichia coli O157:H7).